We begin with the raw amino-acid sequence, 299 residues long: Bifunctional protein FolD (299 aa).

NADP(+)-binding positions include 168–170 (GRS), S193, and I234.

Belongs to the tetrahydrofolate dehydrogenase/cyclohydrolase family. As to quaternary structure, homodimer.

It carries out the reaction (6R)-5,10-methylene-5,6,7,8-tetrahydrofolate + NADP(+) = (6R)-5,10-methenyltetrahydrofolate + NADPH. It catalyses the reaction (6R)-5,10-methenyltetrahydrofolate + H2O = (6R)-10-formyltetrahydrofolate + H(+). It participates in one-carbon metabolism; tetrahydrofolate interconversion. Catalyzes the oxidation of 5,10-methylenetetrahydrofolate to 5,10-methenyltetrahydrofolate and then the hydrolysis of 5,10-methenyltetrahydrofolate to 10-formyltetrahydrofolate. This is Bifunctional protein FolD from Rhizobium johnstonii (strain DSM 114642 / LMG 32736 / 3841) (Rhizobium leguminosarum bv. viciae).